Consider the following 294-residue polypeptide: RAB7A-interacting MON1-CCZ1 complex subunit 1 (294 aa).

A2 is modified (N-acetylalanine).

This sequence belongs to the RIMOC1 family. As to quaternary structure, interacts with the MON1A-CCZ1B complex. Interacts with GDP-bound RAB7A and promotes its interaction with the MON1A-CCZ1B complex.

Its subcellular location is the cytoplasm. It localises to the cytosol. Plays an important role in the removal of damaged mitochondria via mitophagy by controlling the stability and localization of RAB7A. Required for the recruitment of RAB7A and ATG9A vesicles to damaged mitochondria and promotes the stability of RAB7A by inhibiting its proteasomal degradation during mitophagy. The protein is RAB7A-interacting MON1-CCZ1 complex subunit 1 of Homo sapiens (Human).